Here is a 441-residue protein sequence, read N- to C-terminus: Eukaryotic translation initiation factor 3 subunit M (441 aa).

The 170-residue stretch at 196–365 (ESEQAYTYLL…QTFLIHRSTY (170 aa)) folds into the PCI domain. Over residues 405 to 418 (KEEEANKADNKYDS) the composition is skewed to basic and acidic residues. Positions 405-441 (KEEEANKADNKYDSARGFQRGGQRKQPRALDDDMGLE) are disordered.

This sequence belongs to the eIF-3 subunit M family. As to quaternary structure, component of the eukaryotic translation initiation factor 3 (eIF-3) complex.

Its subcellular location is the cytoplasm. Component of the eukaryotic translation initiation factor 3 (eIF-3) complex, which is involved in protein synthesis of a specialized repertoire of mRNAs and, together with other initiation factors, stimulates binding of mRNA and methionyl-tRNAi to the 40S ribosome. The eIF-3 complex specifically targets and initiates translation of a subset of mRNAs involved in cell proliferation. This is Eukaryotic translation initiation factor 3 subunit M from Phaeosphaeria nodorum (strain SN15 / ATCC MYA-4574 / FGSC 10173) (Glume blotch fungus).